The sequence spans 111 residues: Cell cycle protein GpsB (111 aa).

A coiled-coil region spans residues 38–72 (IKDYEAFHKEFEQLKQQNARLKRELEEQKLAVTQV).

The protein belongs to the GpsB family. As to quaternary structure, forms polymers through the coiled coil domains. Interacts with PBP1, MreC and EzrA.

The protein resides in the cytoplasm. Functionally, divisome component that associates with the complex late in its assembly, after the Z-ring is formed, and is dependent on DivIC and PBP2B for its recruitment to the divisome. Together with EzrA, is a key component of the system that regulates PBP1 localization during cell cycle progression. Its main role could be the removal of PBP1 from the cell pole after pole maturation is completed. Also contributes to the recruitment of PBP1 to the division complex. Not essential for septum formation. The protein is Cell cycle protein GpsB of Bacillus cereus (strain G9842).